The primary structure comprises 490 residues: ATP synthase subunit beta, plastid (490 aa).

170-177 (GGAGVGKT) contributes to the ATP binding site.

It belongs to the ATPase alpha/beta chains family. In terms of assembly, F-type ATPases have 2 components, CF(1) - the catalytic core - and CF(0) - the membrane proton channel. CF(1) has five subunits: alpha(3), beta(3), gamma(1), delta(1), epsilon(1). CF(0) has four main subunits: a(1), b(1), b'(1) and c(9-12).

It is found in the plastid membrane. It carries out the reaction ATP + H2O + 4 H(+)(in) = ADP + phosphate + 5 H(+)(out). Produces ATP from ADP in the presence of a proton gradient across the membrane. The catalytic sites are hosted primarily by the beta subunits. The sequence is that of ATP synthase subunit beta, plastid (atpB) from Cuscuta japonica (Japanese dodder).